We begin with the raw amino-acid sequence, 122 residues long: MVQQETRLKVADNTGAKEILCIRVMGGSTRRYANIGDVIVATVKEATPGGVVKKGDVVKAVVVRSVKGARRKDGSYIKFDENAAVIIKDDQTPKGTRIFGPVARELRDKKFMKIVSLAPEVL.

The protein belongs to the universal ribosomal protein uL14 family. As to quaternary structure, part of the 50S ribosomal subunit. Forms a cluster with proteins L3 and L19. In the 70S ribosome, L14 and L19 interact and together make contacts with the 16S rRNA in bridges B5 and B8.

Binds to 23S rRNA. Forms part of two intersubunit bridges in the 70S ribosome. This chain is Large ribosomal subunit protein uL14, found in Lachnospira eligens (strain ATCC 27750 / DSM 3376 / VPI C15-48 / C15-B4) (Eubacterium eligens).